The primary structure comprises 138 residues: Actophorin (138 aa).

Ser-2 is modified (blocked amino end (Ser)). Residues 3-134 (GIAVSDDCVQ…SEDAVSERAK (132 aa)) enclose the ADF-H domain.

It belongs to the actin-binding proteins ADF family. As to quaternary structure, monomer.

It is found in the cytoplasm. Its function is as follows. Forms a one to one complex with monomeric actin. Can regulate the pool available for polymerization. Severs actin filaments in a dose-dependent manner. The protein is Actophorin of Acanthamoeba castellanii (Amoeba).